A 727-amino-acid chain; its full sequence is Glucans biosynthesis glucosyltransferase H (727 aa).

Residues 18-38 (SAMPNERPGAMEPQNLSKMPE) form a disordered region. The next 7 membrane-spanning stretches (helical) occupy residues 58–78 (FLVV…MGAV), 97–117 (VNFC…LILL), 278–298 (LQQF…GWWV), 408–428 (IMAY…LMLA), 460–480 (LFYI…LLLL), 496–516 (IFSV…MMFI), and 572–592 (LLAW…ISAW).

Belongs to the glycosyltransferase 2 family. OpgH subfamily.

The protein resides in the cell inner membrane. The protein operates within glycan metabolism; osmoregulated periplasmic glucan (OPG) biosynthesis. Involved in the biosynthesis of osmoregulated periplasmic glucans (OPGs). This chain is Glucans biosynthesis glucosyltransferase H, found in Shewanella baltica (strain OS223).